Consider the following 325-residue polypeptide: Hydroxymethylglutaryl-CoA lyase, mitochondrial (325 aa).

The transit peptide at 1 to 27 (MAAMRKALPRRLVGLASLRAVSTSSMG) directs the protein to the mitochondrion. Positions 33-300 (VKIVEVGPRD…HTGVNLQKLL (268 aa)) constitute a Pyruvate carboxyltransferase domain. Position 41 (arginine 41) interacts with substrate. A divalent metal cation is bound at residue aspartate 42. Position 48 is an N6-acetyllysine; alternate (lysine 48). An N6-succinyllysine; alternate modification is found at lysine 48. Lysine 111 carries the N6-acetyllysine modification. N6-acetyllysine; alternate occurs at positions 137 and 179. An N6-succinyllysine; alternate mark is found at lysine 137 and lysine 179. A divalent metal cation-binding residues include histidine 233 and histidine 235. Cysteine 266 is an active-site residue. Asparagine 275 lines the a divalent metal cation pocket. Positions 323-325 (CKL) match the Microbody targeting signal motif. At lysine 324 the chain carries N6-acetyllysine.

This sequence belongs to the HMG-CoA lyase family. In terms of assembly, homodimer; disulfide-linked. Can also form homotetramers. The cofactor is a divalent metal cation. Highest expression in liver. Expressed in pancreas, kidney, intestine, testis, fibroblasts and lymphoblasts. Very low expression in brain and skeletal muscle. The relative expression of isoform 2 (at mRNA level) is highest in heart (30%), skeletal muscle (22%), and brain (14%).

The protein localises to the mitochondrion matrix. Its subcellular location is the peroxisome. The catalysed reaction is (3S)-3-hydroxy-3-methylglutaryl-CoA = acetoacetate + acetyl-CoA. The protein operates within metabolic intermediate metabolism; (S)-3-hydroxy-3-methylglutaryl-CoA degradation; acetoacetate from (S)-3-hydroxy-3-methylglutaryl-CoA: step 1/1. Stimulated by reducing agents such as dithiothreitol (DTT). Its function is as follows. Mitochondrial 3-hydroxy-3-methylglutaryl-CoA lyase that catalyzes a cation-dependent cleavage of (S)-3-hydroxy-3-methylglutaryl-CoA into acetyl-CoA and acetoacetate, a key step in ketogenesis. Terminal step in leucine catabolism. Ketone bodies (beta-hydroxybutyrate, acetoacetate and acetone) are essential as an alternative source of energy to glucose, as lipid precursors and as regulators of metabolism. This Homo sapiens (Human) protein is Hydroxymethylglutaryl-CoA lyase, mitochondrial (HMGCL).